A 289-amino-acid chain; its full sequence is 4-hydroxy-3-methylbut-2-enyl diphosphate reductase (289 aa).

Residue Cys-12 coordinates [4Fe-4S] cluster. Residues His-41 and His-84 each contribute to the (2E)-4-hydroxy-3-methylbut-2-enyl diphosphate site. The dimethylallyl diphosphate site is built by His-41 and His-84. 2 residues coordinate isopentenyl diphosphate: His-41 and His-84. [4Fe-4S] cluster is bound at residue Cys-106. (2E)-4-hydroxy-3-methylbut-2-enyl diphosphate is bound at residue His-134. His-134 lines the dimethylallyl diphosphate pocket. Isopentenyl diphosphate is bound at residue His-134. Glu-136 serves as the catalytic Proton donor. Residue Ser-172 participates in (2E)-4-hydroxy-3-methylbut-2-enyl diphosphate binding. A [4Fe-4S] cluster-binding site is contributed by Cys-200. (2E)-4-hydroxy-3-methylbut-2-enyl diphosphate contacts are provided by Ser-229, Asn-231, and Ser-273. Dimethylallyl diphosphate-binding residues include Ser-229, Asn-231, and Ser-273. Isopentenyl diphosphate is bound by residues Ser-229, Asn-231, and Ser-273.

Belongs to the IspH family. The cofactor is [4Fe-4S] cluster.

It carries out the reaction isopentenyl diphosphate + 2 oxidized [2Fe-2S]-[ferredoxin] + H2O = (2E)-4-hydroxy-3-methylbut-2-enyl diphosphate + 2 reduced [2Fe-2S]-[ferredoxin] + 2 H(+). The enzyme catalyses dimethylallyl diphosphate + 2 oxidized [2Fe-2S]-[ferredoxin] + H2O = (2E)-4-hydroxy-3-methylbut-2-enyl diphosphate + 2 reduced [2Fe-2S]-[ferredoxin] + 2 H(+). The protein operates within isoprenoid biosynthesis; dimethylallyl diphosphate biosynthesis; dimethylallyl diphosphate from (2E)-4-hydroxy-3-methylbutenyl diphosphate: step 1/1. It participates in isoprenoid biosynthesis; isopentenyl diphosphate biosynthesis via DXP pathway; isopentenyl diphosphate from 1-deoxy-D-xylulose 5-phosphate: step 6/6. Its function is as follows. Catalyzes the conversion of 1-hydroxy-2-methyl-2-(E)-butenyl 4-diphosphate (HMBPP) into a mixture of isopentenyl diphosphate (IPP) and dimethylallyl diphosphate (DMAPP). Acts in the terminal step of the DOXP/MEP pathway for isoprenoid precursor biosynthesis. The protein is 4-hydroxy-3-methylbut-2-enyl diphosphate reductase of Opitutus terrae (strain DSM 11246 / JCM 15787 / PB90-1).